The sequence spans 336 residues: uncharacterized protein (336 aa).

Residues 1–23 (MKTRHLVYLAFALLGLGLAGLLE) form the signal peptide. 3 helical membrane passes run 34–54 (LLSLNRLYLALAGLLTGLLLG), 75–95 (VVVATTLGSTIGLLLAVLLTT), and 106–126 (VHSLLLALGLVALFVYLALGY). Residues 144-255 (VLDTSVLVDG…MARIYGVKAL (112 aa)) enclose the PINc domain. A Mg(2+)-binding site is contributed by D222. The TRAM domain occupies 267–328 (QLQVGDTLKL…IQTQVGRLFF (62 aa)).

It belongs to the PINc/VapC protein family. The cofactor is Mg(2+).

It localises to the membrane. Part of a toxin-antitoxin (TA) system. An RNase. This is an uncharacterized protein from Thermus thermophilus (strain ATCC 27634 / DSM 579 / HB8).